The sequence spans 623 residues: MSKILGIDLGTSNSEAAIMEGGKPVIIPSAEGARMFPSVVAFTKTGERLVGEAARRQAVTNPERTIIAIKRKMGTDYKVEIDGKKYTPQEISAMILQKIKQDAEAYIGEKITKAVITVPAYFNDNQRQATKDAGTIAGLEVLRVINEPTAAALAFGLDKKGSQKILVFDLGGGTLDVTIMEMGDGVFEVLSTSGDTQLGGTDMDNKIIDYIASQFKKDTGIDLRNDKMAMQRLRDAAEKAKIELSSTLQTQVNLPFITADASGPKHLDMMLTRATLEELVREVVERCYAPMRQAISDAKLTANQIDRIILVGGPTRMPIIIETIKKFFGKEPERGIDPMECVAMGASIQGGVLAGEVKDLLLLDVTPLSLGIETLGNVATRLIERNTTIPTRKSQVFSTAADNQTSVEIHVIQGERPMAYDNTTLGRFHLIGIPPAPRGIPQIEVTFDIDANGILNVKAKDLGTGKEQAITITASTKLDKSDIERMVKDAEKFAAEDAAKKEKAEVMNQADTLLYSAEKTLADAGDKITADQKERVTKGSDALREAQKTGDIEKIKAATADLTKTMNEVATVLYQAAQQQYQQQQAAEQAAQQQSGGQQASGSNPGKDPNVVDADYEVVNDKK.

Over residues 582–603 (QQQQAAEQAAQQQSGGQQASGS) the composition is skewed to low complexity. The tract at residues 582–623 (QQQQAAEQAAQQQSGGQQASGSNPGKDPNVVDADYEVVNDKK) is disordered. Acidic residues predominate over residues 614-623 (ADYEVVNDKK).

Belongs to the heat shock protein 70 family.

In terms of biological role, acts as a chaperone. The chain is Chaperone protein DnaK from Methanocella arvoryzae (strain DSM 22066 / NBRC 105507 / MRE50).